The sequence spans 222 residues: Extracellular protein ARB_03106 (222 aa).

The N-terminal stretch at 1-18 is a signal peptide; that stretch reads MRLHSVLAVATAVGCAVA. N-linked (GlcNAc...) asparagine glycans are attached at residues N113 and N126.

The protein resides in the secreted. The polypeptide is Extracellular protein ARB_03106 (Arthroderma benhamiae (strain ATCC MYA-4681 / CBS 112371) (Trichophyton mentagrophytes)).